The following is a 416-amino-acid chain: NADH-quinone oxidoreductase subunit H (416 aa).

9 helical membrane passes run 16-36, 84-104, 124-144, 165-185, 197-217, 260-280, 288-308, 320-340, and 353-373; these read LILA…LAAI, PVYL…FAVI, LAVA…GIVL, VVSY…YAGT, STWY…SMVG, VSAL…PISL, WWPL…YIWL, FMAI…MIVA, and WASG…VVLW.

The protein belongs to the complex I subunit 1 family. NDH-1 is composed of 14 different subunits. Subunits NuoA, H, J, K, L, M, N constitute the membrane sector of the complex.

The protein localises to the cell membrane. The catalysed reaction is a quinone + NADH + 5 H(+)(in) = a quinol + NAD(+) + 4 H(+)(out). Functionally, NDH-1 shuttles electrons from NADH, via FMN and iron-sulfur (Fe-S) centers, to quinones in the respiratory chain. The immediate electron acceptor for the enzyme in this species is believed to be menaquinone. Couples the redox reaction to proton translocation (for every two electrons transferred, four hydrogen ions are translocated across the cytoplasmic membrane), and thus conserves the redox energy in a proton gradient. This subunit may bind ubiquinone. In Mycobacterium sp. (strain JLS), this protein is NADH-quinone oxidoreductase subunit H.